Consider the following 238-residue polypeptide: MTEQNPAAEEQQSAPRRTIKSFVMRAGRMTEGQQRGLEQGWPKYGLELADGLRDFDEVFGRSAPRTFEIGFGMGHSTLEMAAAAPEQDFIGVEVHKPGVGALLSGLVSQKLTNVRVYSCDALEVLRDCVADASLDRVLLFFPDPWHKSRHHKRRIVQPAFAELVRRKLKVGGVLHMATDWEPYAEHMLEVMNVAPGYRNLAQDGRCVPRPTERPVTKFERRGERLGHGVWDLKFQRID.

4 residues coordinate S-adenosyl-L-methionine: E68, E93, D120, and D143. D143 is a catalytic residue. Residues K147, D179, and 216 to 219 (TKFE) each bind substrate.

This sequence belongs to the class I-like SAM-binding methyltransferase superfamily. TrmB family.

It catalyses the reaction guanosine(46) in tRNA + S-adenosyl-L-methionine = N(7)-methylguanosine(46) in tRNA + S-adenosyl-L-homocysteine. It functions in the pathway tRNA modification; N(7)-methylguanine-tRNA biosynthesis. In terms of biological role, catalyzes the formation of N(7)-methylguanine at position 46 (m7G46) in tRNA. This chain is tRNA (guanine-N(7)-)-methyltransferase, found in Stutzerimonas stutzeri (strain A1501) (Pseudomonas stutzeri).